The chain runs to 140 residues: MRLRWQTIVLLLLILGGASASAVYFSMKGNIDVIEDAISVSPASFSIDIAKGAHYVKEVKVKNSGGEAEIYFEDIVEGPDKSAIDVSFHTESGESISSSNKLRLPAGTADSPSETVIHVHIDVDDDAPTGSYAIYIHAKQ.

The signal sequence occupies residues 1-22 (MRLRWQTIVLLLLILGGASASA).

This is an uncharacterized protein from Archaeoglobus fulgidus (strain ATCC 49558 / DSM 4304 / JCM 9628 / NBRC 100126 / VC-16).